Reading from the N-terminus, the 735-residue chain is Funoran endo-beta-hydrolase (735 aa).

The signal sequence occupies residues 1 to 27 (MRVKSVYKKLSVSFILVMLSASQEVNS). Catalysis depends on Glu-200, which acts as the Proton donor. Glu-322 functions as the Nucleophile in the catalytic mechanism.

Belongs to the glycosyl hydrolase 86 family.

The enzyme catalyses Endohydrolysis of beta-(1-&gt;4)-linkages between beta-D-galactopyranose-6-sulfate and 3,6-anhydro-alpha-L-galactopyranose units in funoran.. It catalyses the reaction Hydrolysis of (1-&gt;4)-beta-D-galactosidic linkages in agarose, giving the tetramer as the predominant product.. Its activity is regulated as follows. Agarase activity is enhanced in the presence of NaCl. Agarase activity is significantly inhibited by Zn(2+) and slightly activated by several divalent ions including Mg(2+), Cd(2+) and Ca(2+). Its function is as follows. Endohydrolase that cleaves the beta-1,4 glycosidic bond between beta-D-galactopyranose-6-sulfate (G6S) and 3,6-anhydro-alpha-L-galactopyranose (LA) unit of funoran, a polysaccharide produced by red algae of the genus Gloiopeltis. It releases the disaccharide LA-G6S as the predominant end product. Also acts as a random endo-acting beta-agarase, which can hydrolyze agarose tetrasaccharides and hexasaccharides, and produces disaccharides as smallest products. Besides typical agarose oligosaccharides, it can use methylated galactoses. The enzyme exhibits higher catalytic efficiency towards agarose, but binds funoran preferentially. Has no activity on porphyran. This is Funoran endo-beta-hydrolase from Wenyingzhuangia aestuarii.